Consider the following 586-residue polypeptide: Aspartate--tRNA(Asp/Asn) ligase (586 aa).

E176 is an L-aspartate binding site. The aspartate stretch occupies residues 200–203 (QIFK). Position 222 (R222) interacts with L-aspartate. Residues 222 to 224 (RDE) and Q231 contribute to the ATP site. H449 contributes to the L-aspartate binding site. E483 lines the ATP pocket. Position 490 (R490) interacts with L-aspartate. 535-538 (GIDR) provides a ligand contact to ATP.

It belongs to the class-II aminoacyl-tRNA synthetase family. Type 1 subfamily. As to quaternary structure, homodimer.

The protein localises to the cytoplasm. It catalyses the reaction tRNA(Asx) + L-aspartate + ATP = L-aspartyl-tRNA(Asx) + AMP + diphosphate. Functionally, aspartyl-tRNA synthetase with relaxed tRNA specificity since it is able to aspartylate not only its cognate tRNA(Asp) but also tRNA(Asn). Reaction proceeds in two steps: L-aspartate is first activated by ATP to form Asp-AMP and then transferred to the acceptor end of tRNA(Asp/Asn). In Brachyspira hyodysenteriae (strain ATCC 49526 / WA1), this protein is Aspartate--tRNA(Asp/Asn) ligase.